Reading from the N-terminus, the 531-residue chain is Multidrug resistance protein fnx1 (531 aa).

Residues 1–30 (MVDQVNLATEQTSLLYPEVSRKKEELSVNK) are Cytoplasmic-facing. A helical transmembrane segment spans residues 31-51 (WTILPALWVGGFLSALDMTIV). The Lumenal portion of the chain corresponds to 52–225 (ASLYPVIGSE…NASLLSRIDY (174 aa)). Residues 226 to 246 (LGSFLLVTGITALVVTFNMGG) form a helical membrane-spanning segment. Over 247-252 (DAFPWV) the chain is Cytoplasmic. The helical transmembrane segment at 253–273 (SPVIITLLVSSVLILFAFYWV) threads the bilayer. The Lumenal portion of the chain corresponds to 274 to 297 (EKNIAVEPIAPVEILSQPTPLNVC). The helical transmembrane segment at 298-318 (LGNFFNAFCSFVIVYELPLFF) threads the bilayer. The Cytoplasmic portion of the chain corresponds to 319-360 (ETTLLMPSSEAGVRIFPYVISTSVGSLCSGLYMKKTGRYRNL). Residues 361–381 (VIAGFFFMLMGIVSFAVLTSF) form a helical membrane-spanning segment. At 382–385 (GHRT) the chain is on the lumenal side. Residues 386–406 (PLILISLCLAMTGCSYGMNLT) form a helical membrane-spanning segment. Residues 407 to 496 (STLIAIISSL…QKLVIKSYAT (90 aa)) are Cytoplasmic-facing. The chain crosses the membrane as a helical span at residues 497–517 (AFTWTFALVAIIAFAGFWCSL). Topologically, residues 518 to 531 (RIKQFYLHTSVDRS) are lumenal.

This sequence belongs to the major facilitator superfamily.

Its subcellular location is the vacuole membrane. Functionally, efflux transporter. Confers resistance to a variety of toxic compounds. The chain is Multidrug resistance protein fnx1 (fnx1) from Schizosaccharomyces pombe (strain 972 / ATCC 24843) (Fission yeast).